A 190-amino-acid polypeptide reads, in one-letter code: Elongation factor P-like protein (190 aa).

It belongs to the elongation factor P family.

The protein is Elongation factor P-like protein of Shigella dysenteriae serotype 1 (strain Sd197).